A 108-amino-acid polypeptide reads, in one-letter code: UPF0060 membrane protein SH0717 (108 aa).

The next 4 helical transmembrane spans lie at 5–25 (IFIF…IWLW), 31–51 (SSWL…IATF), 60–80 (VYAA…YIVD), and 86–106 (KYDL…ILPS).

The protein belongs to the UPF0060 family.

Its subcellular location is the cell membrane. The sequence is that of UPF0060 membrane protein SH0717 from Staphylococcus haemolyticus (strain JCSC1435).